Consider the following 122-residue polypeptide: Fluoride-specific ion channel FluC 2 (122 aa).

Transmembrane regions (helical) follow at residues 3–23, 38–58, 62–82, and 93–113; these read ITAI…RMFI, TSIV…LNLT, LLLL…SFIY, and FMHL…CFYL. Na(+) contacts are provided by Gly-72 and Ser-75.

The protein belongs to the fluoride channel Fluc/FEX (TC 1.A.43) family.

Its subcellular location is the cell inner membrane. The catalysed reaction is fluoride(in) = fluoride(out). With respect to regulation, na(+) is not transported, but it plays an essential structural role and its presence is essential for fluoride channel function. Its function is as follows. Fluoride-specific ion channel. Important for reducing fluoride concentration in the cell, thus reducing its toxicity. The sequence is that of Fluoride-specific ion channel FluC 2 from Prochlorococcus marinus (strain MIT 9312).